Consider the following 160-residue polypeptide: Cytochrome b6-f complex subunit 4 (160 aa).

3 consecutive transmembrane segments (helical) span residues 36–56 (LLYMFPVVILGTIACLTGLAV), 95–115 (LLGIVLQSMIPLGLIAIPFIE), and 131–151 (AVFLFGTVFTLYLGIGAALPI).

The protein belongs to the cytochrome b family. PetD subfamily. In terms of assembly, the 4 large subunits of the cytochrome b6-f complex are cytochrome b6, subunit IV (17 kDa polypeptide, PetD), cytochrome f and the Rieske protein, while the 4 small subunits are PetG, PetL, PetM and PetN. The complex functions as a dimer.

It is found in the cellular thylakoid membrane. Functionally, component of the cytochrome b6-f complex, which mediates electron transfer between photosystem II (PSII) and photosystem I (PSI), cyclic electron flow around PSI, and state transitions. The protein is Cytochrome b6-f complex subunit 4 of Synechococcus elongatus (strain ATCC 33912 / PCC 7942 / FACHB-805) (Anacystis nidulans R2).